The sequence spans 256 residues: 5-oxoprolinase subunit A 3 (256 aa).

The protein belongs to the LamB/PxpA family. Forms a complex composed of PxpA, PxpB and PxpC.

It catalyses the reaction 5-oxo-L-proline + ATP + 2 H2O = L-glutamate + ADP + phosphate + H(+). Functionally, catalyzes the cleavage of 5-oxoproline to form L-glutamate coupled to the hydrolysis of ATP to ADP and inorganic phosphate. The protein is 5-oxoprolinase subunit A 3 of Pseudomonas syringae pv. tomato (strain ATCC BAA-871 / DC3000).